Consider the following 231-residue polypeptide: Large ribosomal subunit protein uL1 (231 aa).

This sequence belongs to the universal ribosomal protein uL1 family. As to quaternary structure, part of the 50S ribosomal subunit.

Binds directly to 23S rRNA. The L1 stalk is quite mobile in the ribosome, and is involved in E site tRNA release. Functionally, protein L1 is also a translational repressor protein, it controls the translation of the L11 operon by binding to its mRNA. The sequence is that of Large ribosomal subunit protein uL1 from Mycoplasmopsis synoviae (strain 53) (Mycoplasma synoviae).